A 325-amino-acid chain; its full sequence is Elongation factor P--(R)-beta-lysine ligase (325 aa).

76 to 78 contacts substrate; that stretch reads SPE. ATP contacts are provided by residues 100–102 and N109; that span reads RNE. A substrate-binding site is contributed by Y118. Residue 244 to 245 coordinates ATP; sequence EL. Residue E251 participates in substrate binding. G300 lines the ATP pocket.

Belongs to the class-II aminoacyl-tRNA synthetase family. EpmA subfamily. In terms of assembly, homodimer.

The catalysed reaction is D-beta-lysine + L-lysyl-[protein] + ATP = N(6)-((3R)-3,6-diaminohexanoyl)-L-lysyl-[protein] + AMP + diphosphate + H(+). With EpmB is involved in the beta-lysylation step of the post-translational modification of translation elongation factor P (EF-P) on 'Lys-34'. Catalyzes the ATP-dependent activation of (R)-beta-lysine produced by EpmB, forming a lysyl-adenylate, from which the beta-lysyl moiety is then transferred to the epsilon-amino group of EF-P 'Lys-34'. This Salmonella agona (strain SL483) protein is Elongation factor P--(R)-beta-lysine ligase.